We begin with the raw amino-acid sequence, 204 residues long: dCTP deaminase, dUMP-forming (204 aa).

DCTP is bound by residues 117-122, His128, Gly132, Asp135, 143-145, Gln163, Tyr177, Lys184, and Gln188; these read RSSLGR and TLE. Residue Glu145 is the Proton donor/acceptor of the active site.

In terms of assembly, homotrimer. Two trimers assemble into a hexamer by stacking on top of each other. It depends on Mg(2+) as a cofactor.

The catalysed reaction is dCTP + 2 H2O = dUMP + NH4(+) + diphosphate. It participates in pyrimidine metabolism; dUMP biosynthesis; dUMP from dCTP: step 1/1. Inhibited by dTTP. Bifunctional enzyme that catalyzes both the deamination of dCTP to dUTP and the hydrolysis of dUTP to dUMP without releasing the toxic dUTP intermediate. It also acts as a dUTP diphosphatase with a lower affinity for dUTP than for dCTP. This chain is dCTP deaminase, dUMP-forming, found in Methanocaldococcus jannaschii (strain ATCC 43067 / DSM 2661 / JAL-1 / JCM 10045 / NBRC 100440) (Methanococcus jannaschii).